Here is a 269-residue protein sequence, read N- to C-terminus: Zinc finger protein SNAI2 (269 aa).

The segment at 1–20 (MPRSFLVKKHFNASKKPNYS) is SNAG domain. Residues 81–117 (SSSLGRVSPPPSSDTSSKDHSGSESPISDEEERLQPK) are disordered. C2H2-type zinc fingers lie at residues 129-151 (FQCNLCNKTYSTFSGLAKHKQLH), 160-182 (FSCKYCDKEYVSLGALKMHIRTH), 186-208 (CVCKICGKAFSRPWLLQGHIRTH), and 214-236 (FSCPHCNRAFADRSNLRAHLQTH). A C2H2-type 5; atypical zinc finger spans residues 242 to 265 (YQCKNCSKTFSRMSLLHKHEESGC).

This sequence belongs to the snail C2H2-type zinc-finger protein family. As to quaternary structure, interacts (via SNAG domain) with LIMD1 (via LIM domains), WTIP (via LIM domains) and AJUBA (via LIM domains). Interacts (via zinc fingers) with KPNA2, KPNB1, and TNPO1. May interact (via zinc fingers) with IPO7. In terms of processing, phosphorylated by GSK3B. Once phosphorylated, it becomes a target for ubiquitination. Post-translationally, ubiquitinated by the SCF(FBXO11) complex; ubiquitination requires previous GSK3B-mediated SNAI2 phosphorylation.

It localises to the nucleus. The protein localises to the cytoplasm. Its function is as follows. Transcriptional repressor that modulates both activator-dependent and basal transcription. Involved in the generation and migration of neural crest cells. Plays a role in mediating RAF1-induced transcriptional repression of the TJ protein, occludin (OCLN) and subsequent oncogenic transformation of epithelial cells. Represses BRCA2 expression by binding to its E2-box-containing silencer and recruiting CTBP1 and HDAC1 in breast cells. In epidermal keratinocytes, binds to the E-box in ITGA3 promoter and represses its transcription. Involved in the regulation of ITGB1 and ITGB4 expression and cell adhesion and proliferation in epidermal keratinocytes. Binds to E-box2 domain of BSG and activates its expression during TGFB1-induced epithelial-mesenchymal transition (EMT) in hepatocytes. Represses E-Cadherin/CDH1 transcription via E-box elements. Involved in osteoblast maturation. Binds to RUNX2 and SOC9 promoters and may act as a positive and negative transcription regulator, respectively, in osteoblasts. Binds to CXCL12 promoter via E-box regions in mesenchymal stem cells and osteoblasts. Plays an essential role in TWIST1-induced EMT and its ability to promote invasion and metastasis. This is Zinc finger protein SNAI2 (Snai2) from Mus musculus (Mouse).